A 191-amino-acid polypeptide reads, in one-letter code: UPF0669 protein C6orf120 homolog (191 aa).

A signal peptide spans 1-30 (MAAPRGRAAPWTTALLLLLTSQILSPGSCA). Asparagine 53 carries an N-linked (GlcNAc...) asparagine glycan.

This sequence belongs to the UPF0669 family.

It localises to the secreted. May be involved in induction of apoptosis in CD4(+) T-cells, but not CD8(+) T-cells or hepatocytes. This Macaca fascicularis (Crab-eating macaque) protein is UPF0669 protein C6orf120 homolog.